The primary structure comprises 330 residues: Phosphate acyltransferase (330 aa).

The protein belongs to the PlsX family. In terms of assembly, homodimer. Probably interacts with PlsY.

It localises to the cytoplasm. It catalyses the reaction a fatty acyl-[ACP] + phosphate = an acyl phosphate + holo-[ACP]. Its pathway is lipid metabolism; phospholipid metabolism. Functionally, catalyzes the reversible formation of acyl-phosphate (acyl-PO(4)) from acyl-[acyl-carrier-protein] (acyl-ACP). This enzyme utilizes acyl-ACP as fatty acyl donor, but not acyl-CoA. This is Phosphate acyltransferase from Streptococcus pneumoniae (strain 70585).